Reading from the N-terminus, the 446-residue chain is Glucose-6-phosphate isomerase (446 aa).

Glutamate 288 functions as the Proton donor in the catalytic mechanism. Active-site residues include histidine 309 and lysine 423.

It belongs to the GPI family.

The protein resides in the cytoplasm. It carries out the reaction alpha-D-glucose 6-phosphate = beta-D-fructose 6-phosphate. The protein operates within carbohydrate biosynthesis; gluconeogenesis. Its pathway is carbohydrate degradation; glycolysis; D-glyceraldehyde 3-phosphate and glycerone phosphate from D-glucose: step 2/4. In terms of biological role, catalyzes the reversible isomerization of glucose-6-phosphate to fructose-6-phosphate. This is Glucose-6-phosphate isomerase from Lacticaseibacillus casei (strain BL23) (Lactobacillus casei).